The primary structure comprises 148 residues: UPF0178 protein SUN_1096 (148 aa).

This sequence belongs to the UPF0178 family.

This is UPF0178 protein SUN_1096 from Sulfurovum sp. (strain NBC37-1).